The following is a 387-amino-acid chain: Colicin-N (387 aa).

Residues 1-11 show a composition bias toward polar residues; that stretch reads MGSNGADNAHN. Residues 1–106 form a disordered region; that stretch reads MGSNGADNAH…ITITPDNSKP (106 aa). Positions 14 to 30 are enriched in gly residues; the sequence is FGGGKNPGIGNTSGAGS. The span at 31-48 shows a compositional bias: low complexity; sequence NGSASSNRGNSNGWSWSN. A compositionally biased stretch (gly residues) spans 78 to 87; sequence GNSGNRGNNG. 2 helical membrane passes run 325-345 and 350-370; these read IIGG…LSFL and LAVT…SSFI.

The protein belongs to the channel forming colicin family.

The protein resides in the cell membrane. Its function is as follows. This colicin is a channel-forming colicin. This class of transmembrane toxins depolarize the cytoplasmic membrane, leading to dissipation of cellular energy. Functionally, colicins are polypeptide toxins produced by and active against E.coli and closely related bacteria. The protein is Colicin-N (cna) of Escherichia coli.